Reading from the N-terminus, the 389-residue chain is ATP-dependent (S)-NAD(P)H-hydrate dehydratase (389 aa).

A YjeF C-terminal domain is found at 53–389 (TLQLVRNIIP…RGGGRLPQAL (337 aa)). Phosphotyrosine is present on Tyr85. Residues Glu153 and 205–211 (NHMEFSR) each bind (6S)-NADPHX. ATP contacts are provided by residues 245–249 (KGERD) and 264–273 (GSSRRCGGQG). Asp274 provides a ligand contact to (6S)-NADPHX. Disordered stretches follow at residues 316-350 (KTRAQGGCGPRTTAPTSPHLPLSPSPQVQPSPGGC) and 369-389 (RSLHHHLRHDRRGGGRLPQAL).

The protein belongs to the NnrD/CARKD family. Mg(2+) is required as a cofactor.

Its subcellular location is the mitochondrion. It catalyses the reaction (6S)-NADHX + ATP = ADP + phosphate + NADH + H(+). It carries out the reaction (6S)-NADPHX + ATP = ADP + phosphate + NADPH + H(+). Catalyzes the dehydration of the S-form of NAD(P)HX at the expense of ATP, which is converted to ADP. Together with NAD(P)HX epimerase, which catalyzes the epimerization of the S- and R-forms, the enzyme allows the repair of both epimers of NAD(P)HX, a damaged form of NAD(P)H that is a result of enzymatic or heat-dependent hydration. The polypeptide is ATP-dependent (S)-NAD(P)H-hydrate dehydratase (Macaca mulatta (Rhesus macaque)).